The primary structure comprises 358 residues: Tribbles homolog 3 (358 aa).

Residues 1–54 are disordered; it reads MRATPLAAPAGSLSRKKRLELDDNLDTERPVQKRARSGPQPRLPPCLLPLSPPT. The interval 1–127 is interaction with DDIT3/CHOP; that stretch reads MRATPLAAPA…KHVARPTEVL (127 aa). Serine 12 is subject to Phosphoserine. Residues 41 to 54 are compositionally biased toward pro residues; that stretch reads PRLPPCLLPLSPPT. A Protein kinase domain is found at 68–316; that stretch reads LGPYVLLEPE…TGILLHPWLR (249 aa).

The protein belongs to the protein kinase superfamily. CAMK Ser/Thr protein kinase family. Tribbles subfamily. Interacts with AKT1, AKT2, MAP2K1 and MAP2K7. Interacts with ATF4. Interacts with DDIT3/CHOP and inhibits its interaction with EP300/P300. Interacts with APOBEC3C. Interacts (via N-terminus) with APOBEC3A. Interacts with RELA. Highest expression in liver, pancreas, peripheral blood leukocytes and bone marrow. Also highly expressed in a number of primary lung, colon and breast tumors. Expressed in spleen, thymus, and prostate and is undetectable in other examined tissues, including testis, ovary, small intestine, colon, leukocyte, heart, brain, placenta, lung, skeletal muscle, and kidney.

Its subcellular location is the nucleus. Inactive protein kinase which acts as a regulator of the integrated stress response (ISR), a process for adaptation to various stress. Inhibits the transcriptional activity of DDIT3/CHOP and is involved in DDIT3/CHOP-dependent cell death during ER stress. May play a role in programmed neuronal cell death but does not appear to affect non-neuronal cells. Acts as a negative feedback regulator of the ATF4-dependent transcription during the ISR: while TRIB3 expression is promoted by ATF4, TRIB3 protein interacts with ATF4 and inhibits ATF4 transcription activity. Disrupts insulin signaling by binding directly to Akt kinases and blocking their activation. May bind directly to and mask the 'Thr-308' phosphorylation site in AKT1. Interacts with the NF-kappa-B transactivator p65 RELA and inhibits its phosphorylation and thus its transcriptional activation activity. Interacts with MAPK kinases and regulates activation of MAP kinases. Can inhibit APOBEC3A editing of nuclear DNA. In Homo sapiens (Human), this protein is Tribbles homolog 3 (TRIB3).